The chain runs to 562 residues: Arginine--tRNA ligase (562 aa).

Residues 121-131 carry the 'HIGH' region motif; that stretch reads PNIAKPMGMGH.

It belongs to the class-I aminoacyl-tRNA synthetase family. As to quaternary structure, monomer.

The protein localises to the cytoplasm. The enzyme catalyses tRNA(Arg) + L-arginine + ATP = L-arginyl-tRNA(Arg) + AMP + diphosphate. In Limosilactobacillus fermentum (strain NBRC 3956 / LMG 18251) (Lactobacillus fermentum), this protein is Arginine--tRNA ligase.